The chain runs to 449 residues: Probable glycosyltransferase 5 (449 aa).

The span at 1-14 (MMEKHGGKVTSDRR) shows a compositional bias: basic and acidic residues. A disordered region spans residues 1 to 24 (MMEKHGGKVTSDRRAGRRQHGQRC). Over 1 to 28 (MMEKHGGKVTSDRRAGRRQHGQRCSASD) the chain is Cytoplasmic. The helical; Signal-anchor for type II membrane protein transmembrane segment at 29–49 (AAPLVVVVILIVGALFLILGP) threads the bilayer. Residues 50–449 (TGSSSFTVPR…HPTFRAARPT (400 aa)) are Lumenal-facing. The tract at residues 74 to 109 (APPPPPPPAQMQAGANASSEEDSGLPPPRQLTDPPY) is disordered. N-linked (GlcNAc...) asparagine glycans are attached at residues Asn89, Asn413, and Asn422.

This sequence belongs to the glycosyltransferase 34 family.

It localises to the golgi apparatus membrane. Functionally, probable glycosyltransferase that may be involved in the biosynthesis of xyloglucan. The polypeptide is Probable glycosyltransferase 5 (Oryza sativa subsp. indica (Rice)).